We begin with the raw amino-acid sequence, 218 residues long: Adenylate kinase (218 aa).

11–16 (GAGKGT) contacts ATP. The tract at residues 31–60 (STGDMFREAMANKTKVGLEAKSYIDKGNLV) is NMP. Residues Thr32, Arg37, 58 to 60 (NLV), 86 to 89 (GFPR), and Gln93 each bind AMP. The tract at residues 127 to 165 (ARYMCKNCGATYNKISKQPKVEGTCDRCGSHEFYQREDD) is LID. Arg128 is an ATP binding site. Cys131 and Cys134 together coordinate Zn(2+). ATP is bound at residue 137 to 138 (TY). 2 residues coordinate Zn(2+): Cys151 and Cys154. The AMP site is built by Arg162 and Arg173. Residue Gln201 coordinates ATP.

This sequence belongs to the adenylate kinase family. In terms of assembly, monomer.

Its subcellular location is the cytoplasm. The catalysed reaction is AMP + ATP = 2 ADP. It participates in purine metabolism; AMP biosynthesis via salvage pathway; AMP from ADP: step 1/1. In terms of biological role, catalyzes the reversible transfer of the terminal phosphate group between ATP and AMP. Plays an important role in cellular energy homeostasis and in adenine nucleotide metabolism. The protein is Adenylate kinase of Lactobacillus acidophilus (strain ATCC 700396 / NCK56 / N2 / NCFM).